Reading from the N-terminus, the 776-residue chain is Lysyl oxidase homolog 2 (776 aa).

The signal sequence occupies residues 1-25; the sequence is MELHFGSCLSGCLALLVLLPSLSLA. SRCR domains lie at 61–162, 191–305, 329–428, and 438–546; these read VRLA…VVCS, IRPI…VSCV, VRLR…VRCN, and VRLN…VACS. Disulfide bonds link Cys87–Cys151, Cys100–Cys161, Cys131–Cys141, Cys221–Cys294, Cys234–Cys304, Cys268–Cys278, Cys354–Cys417, Cys367–Cys427, and Cys398–Cys408. Asn267 carries N-linked (GlcNAc...) asparagine glycosylation. Asn291 carries an N-linked (GlcNAc...) asparagine glycan. Residue Asn458 is glycosylated (N-linked (GlcNAc...) asparagine). 3 disulfide bridges follow: Cys467/Cys532, Cys480/Cys545, and Cys514/Cys524. Residues 550-753 are lysyl-oxidase like; it reads PDLVLNAEIV…WMYNCHVGGA (204 aa). Residues Asp551 and Leu552 each coordinate Ca(2+). Intrachain disulfides connect Cys575/Cys627, Cys581/Cys697, Cys659/Cys675, and Cys665/Cys687. The Cu cation site is built by His628, His630, and His632. An N-linked (GlcNAc...) asparagine glycan is attached at Asn646. A cross-link (lysine tyrosylquinone (Lys-Tyr)) is located at residues 655-691; it reads KASFCLEDTECEGDIQKSYECANFGEQGITMGCWDMY. Residue Tyr691 is modified to 2',4',5'-topaquinone. Glu724, Asp726, Asn729, and Asn730 together coordinate Ca(2+). Cys734 and Cys748 form a disulfide bridge.

It belongs to the lysyl oxidase family. In terms of assembly, component of some chromatin repressor complex. Interacts with SNAI1. Interacts with TAF10. Interacts with HSPA5. Interacts with EFEMP2. Cu cation is required as a cofactor. The cofactor is lysine tyrosylquinone residue. The lysine tyrosylquinone cross-link (LTQ) is generated by condensation of the epsilon-amino group of a lysine with a topaquinone produced by oxidation of tyrosine. Post-translationally, N-glycosylated. N-glycosylation on Asn-458 and Asn-646 may be essential for proper folding and secretion; may be composed of a fucosylated carbohydrates attached to a trimannose N-linked glycan core. As to expression, ubiquitous. Highest expression in skin, lung and thymus. Present in chondrocytes: mainly expressed by chondrocytes in healing fractures and in epiphyseal growth plates (at protein level).

Its subcellular location is the secreted. The protein resides in the extracellular space. It localises to the extracellular matrix. It is found in the basement membrane. The protein localises to the nucleus. Its subcellular location is the chromosome. The protein resides in the endoplasmic reticulum. The catalysed reaction is L-lysyl-[protein] + O2 + H2O = (S)-2-amino-6-oxohexanoyl-[protein] + H2O2 + NH4(+). With respect to regulation, specifically inhibited by a mouse monoclonal antibody AB0023, inhibition occurs in a non-competitive manner. In terms of biological role, mediates the post-translational oxidative deamination of lysine residues on target proteins leading to the formation of deaminated lysine (allysine). Acts as a transcription corepressor and specifically mediates deamination of trimethylated 'Lys-4' of histone H3 (H3K4me3), a specific tag for epigenetic transcriptional activation. Shows no activity against histone H3 when it is trimethylated on 'Lys-9' (H3K9me3) or 'Lys-27' (H3K27me3) or when 'Lys-4' is monomethylated (H3K4me1) or dimethylated (H3K4me2). Also mediates deamination of methylated TAF10, a member of the transcription factor IID (TFIID) complex, which induces release of TAF10 from promoters, leading to inhibition of TFIID-dependent transcription. LOXL2-mediated deamination of TAF10 results in transcriptional repression of genes required for embryonic stem cell pluripotency including POU5F1/OCT4, NANOG, KLF4 and SOX2. Involved in epithelial to mesenchymal transition (EMT) via interaction with SNAI1 and participates in repression of E-cadherin, probably by mediating deamination of histone H3. During EMT, involved with SNAI1 in negatively regulating pericentromeric heterochromatin transcription. SNAI1 recruits LOXL2 to pericentromeric regions to oxidize histone H3 and repress transcription which leads to release of heterochromatin component CBX5/HP1A, enabling chromatin reorganization and acquisition of mesenchymal traits. Interacts with the endoplasmic reticulum protein HSPA5 which activates the IRE1-XBP1 pathway of the unfolded protein response, leading to expression of several transcription factors involved in EMT and subsequent EMT induction. When secreted into the extracellular matrix, promotes cross-linking of extracellular matrix proteins by mediating oxidative deamination of peptidyl lysine residues in precursors to fibrous collagen and elastin. Acts as a regulator of sprouting angiogenesis, probably via collagen IV scaffolding. Acts as a regulator of chondrocyte differentiation, probably by regulating expression of factors that control chondrocyte differentiation. The chain is Lysyl oxidase homolog 2 (Loxl2) from Mus musculus (Mouse).